The sequence spans 341 residues: Anthranilate phosphoribosyltransferase (341 aa).

5-phospho-alpha-D-ribose 1-diphosphate contacts are provided by residues Gly81, 84-85, Ser89, 91-94, 109-117, and Ser121; these read GD, NIST, and KHGNRSASS. Anthranilate is bound at residue Gly81. Ser93 contributes to the Mg(2+) binding site. Anthranilate is bound at residue Asn112. Position 167 (Arg167) interacts with anthranilate. 2 residues coordinate Mg(2+): Asp225 and Glu226.

This sequence belongs to the anthranilate phosphoribosyltransferase family. As to quaternary structure, homodimer. It depends on Mg(2+) as a cofactor.

It catalyses the reaction N-(5-phospho-beta-D-ribosyl)anthranilate + diphosphate = 5-phospho-alpha-D-ribose 1-diphosphate + anthranilate. Its pathway is amino-acid biosynthesis; L-tryptophan biosynthesis; L-tryptophan from chorismate: step 2/5. In terms of biological role, catalyzes the transfer of the phosphoribosyl group of 5-phosphorylribose-1-pyrophosphate (PRPP) to anthranilate to yield N-(5'-phosphoribosyl)-anthranilate (PRA). The protein is Anthranilate phosphoribosyltransferase of Nocardioides sp. (strain ATCC BAA-499 / JS614).